A 123-amino-acid chain; its full sequence is Methylmalonyl-CoA carboxyltransferase 1.3S subunit (123 aa).

The Biotinyl-binding domain maps to 46-123 (GAGAGKAGEG…QGGQGLIKIG (78 aa)). Lys-89 bears the N6-biotinyllysine mark.

Transcarboxylase is composed of three subunits: 1.3S, 5S, and 12S. The core of the enzyme is composed of six 12S subunits. On each side of the core there are three pairs of 5S subunits. Each 5S dimer is attached to the core by two 1.3S subunits. Thus the total number of chains is 30 (6 + 12 + 12).

The enzyme catalyses (S)-methylmalonyl-CoA + pyruvate = propanoyl-CoA + oxaloacetate. The biotinyl 1.3S subunit serves as a carboxyl carrier between the substrate-binding sites on the 12S and 5S subunits. This is Methylmalonyl-CoA carboxyltransferase 1.3S subunit from Propionibacterium freudenreichii subsp. shermanii.